A 1229-amino-acid chain; its full sequence is DNA-directed RNA polymerase subunit beta (1229 aa).

It belongs to the RNA polymerase beta chain family. The RNAP catalytic core consists of 2 alpha, 1 beta, 1 beta' and 1 omega subunit. When a sigma factor is associated with the core the holoenzyme is formed, which can initiate transcription.

It catalyses the reaction RNA(n) + a ribonucleoside 5'-triphosphate = RNA(n+1) + diphosphate. In terms of biological role, DNA-dependent RNA polymerase catalyzes the transcription of DNA into RNA using the four ribonucleoside triphosphates as substrates. The sequence is that of DNA-directed RNA polymerase subunit beta from Roseiflexus sp. (strain RS-1).